The primary structure comprises 422 residues: Putidaredoxin reductase CamA (422 aa).

Alanine 15, aspartate 37, lysine 50, valine 83, and arginine 134 together coordinate FAD. Position 156 to 165 (156 to 165) interacts with NAD(+); the sequence is GGGYIGLEVA. FAD-binding residues include aspartate 284 and valine 302.

This sequence belongs to the FAD-dependent oxidoreductase family. In terms of assembly, homodimer or monomer. The cofactor is FAD.

The catalysed reaction is 2 reduced [2Fe-2S]-[putidaredoxin] + NAD(+) + H(+) = 2 oxidized [2Fe-2S]-[putidaredoxin] + NADH. It functions in the pathway terpene metabolism; (R)-camphor degradation. The oxidation of camphor by cytochrome P450-CAM CamC requires the participation of the flavoprotein, putidaredoxin reductase CamA, and the iron-sulfur protein, putidaredoxin CamB, to mediate the transfer of electrons from NADH to P450 for oxygen activation. This chain is Putidaredoxin reductase CamA, found in Pseudomonas putida (Arthrobacter siderocapsulatus).